The primary structure comprises 758 residues: MTIVTNLGFPRIGARRELKRALESHWRGETDATQLQHTARELRARHWRLQRDAGVDLPPSNDFSLYDHVLDTAFLFDAIPQRYRGLVDADPLAGYFAMARGRQADNIDLHALEMTKWFDTNYHYLVPELHRDQHFALRGNKPIAEFEEALALGITTRPVLLGPVSFLLLSKTVDGSNRLDLLERLLPVYTQLLRQLQESGAEWVQIDEPTLVLDLDAQTQQAFRKAYAILNQGPRPKLLLTSYFGPLGDNLELALQLPADGLHIDLVRGTEQLDAVLNTLPAGRVLSAGLVNGRNIWRTDLDNALTMARYAQGHVGADRLWLAPSCSLLHVPVDLEQEKNLDADVRNWLAFAKQKLSELRVLADALDNKPEAETALTQTRQALEARRQSPKVHRPDVAQRLAALTPDTTRRNTAYPQRSQAQQHTLNLPAYPTTTIGSFPQTLEVREARAQFKSGKLSESDYEAFLKAETERCVRTQEEIGLDVLVHGEFERNDMVEYFGEQLDGFIFTKLGWVQSYGSRCVKPPIIYGDVVRPAPMTVTWSAYAQSLTDKPMKGMLTGPVTMLQWSFVRDDQERAQTCRQIALALRDEVQDLEKAGIKVIQIDEPAIREGLPLRRGEWADYLNWAVESFRIASSNVHDTTQIHTHMCYSEFNDIIEAVAALDADVISIETSRSRMELLDAFVKFRYPNAIGPGVYDIHSPRVPQEEEMVLLLKKARAVLPPEQLWVNPDCGLKTRGWKETRAALQTMVHAAQRLRAE.

Residues 16 to 19 (RELK) and Lys116 contribute to the 5-methyltetrahydropteroyltri-L-glutamate site. L-homocysteine is bound by residues 436–438 (IGS) and Glu489. L-methionine contacts are provided by residues 436-438 (IGS) and Glu489. 5-methyltetrahydropteroyltri-L-glutamate is bound by residues 520–521 (RC) and Trp566. Asp604 provides a ligand contact to L-homocysteine. Asp604 serves as a coordination point for L-methionine. Residue Glu610 participates in 5-methyltetrahydropteroyltri-L-glutamate binding. His646, Cys648, and Glu670 together coordinate Zn(2+). Residue His699 is the Proton donor of the active site. Cys731 contacts Zn(2+).

The protein belongs to the vitamin-B12 independent methionine synthase family. Zn(2+) serves as cofactor.

It catalyses the reaction 5-methyltetrahydropteroyltri-L-glutamate + L-homocysteine = tetrahydropteroyltri-L-glutamate + L-methionine. It functions in the pathway amino-acid biosynthesis; L-methionine biosynthesis via de novo pathway; L-methionine from L-homocysteine (MetE route): step 1/1. Its function is as follows. Catalyzes the transfer of a methyl group from 5-methyltetrahydrofolate to homocysteine resulting in methionine formation. This Xylella fastidiosa (strain M23) protein is 5-methyltetrahydropteroyltriglutamate--homocysteine methyltransferase.